Consider the following 193-residue polypeptide: dCTP deaminase (193 aa).

Residues 110 to 115, D128, 136 to 138, Y171, K178, and Q182 contribute to the dCTP site; these read RSSLAR and VLE. Catalysis depends on E138, which acts as the Proton donor/acceptor.

Belongs to the dCTP deaminase family. Homotrimer.

The catalysed reaction is dCTP + H2O + H(+) = dUTP + NH4(+). It participates in pyrimidine metabolism; dUMP biosynthesis; dUMP from dCTP (dUTP route): step 1/2. Catalyzes the deamination of dCTP to dUTP. This chain is dCTP deaminase, found in Tolumonas auensis (strain DSM 9187 / NBRC 110442 / TA 4).